The sequence spans 263 residues: uncharacterized protein (263 aa).

It belongs to the A.longa ORF167/ORF288 family.

The protein resides in the plastid. This is an uncharacterized protein from Euglena longa (Euglenophycean alga).